The primary structure comprises 380 residues: tRNA-specific 2-thiouridylase MnmA (380 aa).

ATP-binding positions include 26–33 (AMSGGVDS) and L52. The Nucleophile role is filled by C120. An intrachain disulfide couples C120 to C217. G144 provides a ligand contact to ATP. The interval 166-168 (RDQ) is interaction with tRNA. The active-site Cysteine persulfide intermediate is C217.

It belongs to the MnmA/TRMU family.

Its subcellular location is the cytoplasm. The catalysed reaction is S-sulfanyl-L-cysteinyl-[protein] + uridine(34) in tRNA + AH2 + ATP = 2-thiouridine(34) in tRNA + L-cysteinyl-[protein] + A + AMP + diphosphate + H(+). Functionally, catalyzes the 2-thiolation of uridine at the wobble position (U34) of tRNA, leading to the formation of s(2)U34. The chain is tRNA-specific 2-thiouridylase MnmA from Jannaschia sp. (strain CCS1).